The following is a 575-amino-acid chain: Membrane protein insertase YidC (575 aa).

6 consecutive transmembrane segments (helical) span residues 6 to 26, 357 to 377, 381 to 401, 448 to 468, 490 to 510, and 526 to 546; these read VFLI…WGKD, FSIM…LHSF, WGWA…PLSA, GGCL…WVLV, PYFI…KLTP, and PLVF…YWVV.

The protein belongs to the OXA1/ALB3/YidC family. Type 1 subfamily. In terms of assembly, interacts with the Sec translocase complex via SecD. Specifically interacts with transmembrane segments of nascent integral membrane proteins during membrane integration.

Its subcellular location is the cell inner membrane. Functionally, required for the insertion and/or proper folding and/or complex formation of integral membrane proteins into the membrane. Involved in integration of membrane proteins that insert both dependently and independently of the Sec translocase complex, as well as at least some lipoproteins. Aids folding of multispanning membrane proteins. The polypeptide is Membrane protein insertase YidC (Xanthomonas campestris pv. campestris (strain B100)).